The sequence spans 326 residues: Cytosolic sulfotransferase 12 (326 aa).

A 3'-phosphoadenylyl sulfate-binding site is contributed by 75–80; the sequence is KSGTTW. Catalysis depends on His-140, which acts as the Proton acceptor. Residues Arg-162, Ser-170, Tyr-228, and 290–292 contribute to the 3'-phosphoadenylyl sulfate site; that span reads RKG.

It belongs to the sulfotransferase 1 family. Dimer. As to expression, expressed in the aerial parts of seedlings, in roots, leaves and flowers. Not detected in stems and siliques.

It localises to the cytoplasm. Its function is as follows. Sulfotransferase that utilizes 3'-phospho-5'-adenylyl sulfate (PAPS) as sulfonate donor to catalyze the stereospecific sulfate conjugation of 24-epibrassinosteroids. Preferred substrates are 24-epicathasterone and 6-deoxo-24-epicathasterone. Low activity with 22-deoxy-24-epiteasterone. No activity with 24-epimers catasterone and brassinolide. Sulfonates salicylic acid. May be involved in detoxification. Enhances plant response to pathogen infection and contributes to long distance signaling in systemic acquired resistance (SAR). This chain is Cytosolic sulfotransferase 12 (SOT12), found in Arabidopsis thaliana (Mouse-ear cress).